We begin with the raw amino-acid sequence, 327 residues long: Delta(6)-protoilludene synthase HYPSUDRAFT_138665 (327 aa).

D79, N215, S219, and E223 together coordinate Mg(2+). Residues 79–83 (DEHTD) carry the DDXXD motif motif. (2E,6E)-farnesyl diphosphate is bound by residues R304 and Y305.

This sequence belongs to the terpene synthase family. The cofactor is Mg(2+).

The enzyme catalyses (2E,6E)-farnesyl diphosphate = Delta(6)-protoilludene + diphosphate. Terpene cyclase that catalyzes the cyclization of farnesyl diphosphate (FPP) to delta(6)-protoilludene. This chain is Delta(6)-protoilludene synthase HYPSUDRAFT_138665, found in Hypholoma sublateritium (strain FD-334 SS-4).